We begin with the raw amino-acid sequence, 265 residues long: Protein Msed_2121 (265 aa).

The protein belongs to the CinA family.

This is Protein Msed_2121 from Metallosphaera sedula (strain ATCC 51363 / DSM 5348 / JCM 9185 / NBRC 15509 / TH2).